The following is a 226-amino-acid chain: Phosphoglycolate phosphatase (226 aa).

The Nucleophile role is filled by Asp-9. The Mg(2+) site is built by Asp-9 and Asp-11. Lys-150 provides a ligand contact to substrate. The Mg(2+) site is built by Asp-173 and Asp-177.

It belongs to the archaeal SPP-like hydrolase family. The cofactor is Mg(2+).

The enzyme catalyses 2-phosphoglycolate + H2O = glycolate + phosphate. In terms of biological role, catalyzes the dephosphorylation of 2-phosphoglycolate. This Methanosarcina acetivorans (strain ATCC 35395 / DSM 2834 / JCM 12185 / C2A) protein is Phosphoglycolate phosphatase.